The chain runs to 1043 residues: Sucrose-phosphate synthase 1 (1043 aa).

Residues 95–117 (EEKEAQRLAKRRLEREKGRREAT) show a composition bias toward basic and acidic residues. The interval 95–127 (EEKEAQRLAKRRLEREKGRREATADMSEEFSEG) is disordered. Residues Ser121, Ser125, Ser152, and Ser155 each carry the phosphoserine modification. Residues 670-693 (PRHPQWQSDDGGDNSEPESPSDSL) form a disordered region.

Belongs to the glycosyltransferase 1 family. In terms of assembly, homodimer or homotetramer. In terms of processing, phosphorylated at Ser-152 upon sucrose supply. As to expression, expressed in seeds, stems, rosette leaves, flowers and siliques. Highly expressed in maturing nectaries.

The catalysed reaction is beta-D-fructose 6-phosphate + UDP-alpha-D-glucose = sucrose 6(F)-phosphate + UDP + H(+). The protein operates within glycan biosynthesis; sucrose biosynthesis; sucrose from D-fructose 6-phosphate and UDP-alpha-D-glucose: step 1/2. Its activity is regulated as follows. Activity is regulated by phosphorylation and moderated by concentration of metabolites and light. Plays a major role in photosynthetic sucrose synthesis by catalyzing the rate-limiting step of sucrose biosynthesis from UDP-glucose and fructose- 6-phosphate. Involved in the regulation of carbon partitioning in the leaves of plants. May regulate the synthesis of sucrose and therefore play a major role as a limiting factor in the export of photoassimilates out of the leaf. Plays a role for sucrose availability that is essential for plant growth and fiber elongation. Required for nectar secretion. The protein is Sucrose-phosphate synthase 1 (SPS1) of Arabidopsis thaliana (Mouse-ear cress).